Reading from the N-terminus, the 353-residue chain is Rhodopsin (353 aa).

Residues 1–36 (MNGTEGPYFYVPMVNTSGIVRSPYEYPQYYLVNPAA) lie on the Extracellular side of the membrane. N-linked (GlcNAc...) asparagine glycosylation is found at Asn-2 and Asn-15. Residues 37–61 (YARLGAYMFLLILVGFPINFLTLYV) form a helical membrane-spanning segment. Over 62-73 (TIEHKKLRTPLN) the chain is Cytoplasmic. The helical transmembrane segment at 74-96 (YILLNLAVADLFMVFGGFTTTMY) threads the bilayer. Residues 97-110 (TSMHGYFVLGRLGC) lie on the Extracellular side of the membrane. Cys-110 and Cys-187 are oxidised to a cystine. The helical transmembrane segment at 111 to 133 (NIEGFFATLGGEIALWSLVVLAI) threads the bilayer. The 'Ionic lock' involved in activated form stabilization signature appears at 134–136 (ERW). The Cytoplasmic segment spans residues 134 to 152 (ERWVVVCKPISNFRFGENH). The chain crosses the membrane as a helical span at residues 153-173 (AIMGLAFTWLMALACAAPPLV). Residues 174 to 202 (GWSRYIPEGMQCSCGIDYYTRAEGFNNES) are Extracellular-facing. The N-linked (GlcNAc...) asparagine glycan is linked to Asn-200. The helical transmembrane segment at 203–224 (FVIYMFVCHFTVPLMVVFFCYG) threads the bilayer. Residues 225 to 252 (RLLCAVKEAAAAQQESETTQRAEREVTR) are Cytoplasmic-facing. A helical transmembrane segment spans residues 253–274 (MVIMMVVAFLVCWLPYASVAWW). Over 275-286 (IFTHQGSEFGPV) the chain is Extracellular. A helical membrane pass occupies residues 287–308 (FMTIPAFFAKSSSIYNPMIYIC). An N6-(retinylidene)lysine modification is found at Lys-296. Residues 309 to 353 (LNKQFRHCMITTLCCGKNPFEEEEGASTASKTEASSVSSSSVSPA) lie on the Cytoplasmic side of the membrane. S-palmitoyl cysteine attachment occurs at residues Cys-322 and Cys-323. Residues 331–353 (EEGASTASKTEASSVSSSSVSPA) form a disordered region. Positions 334–353 (ASTASKTEASSVSSSSVSPA) are enriched in low complexity.

The protein belongs to the G-protein coupled receptor 1 family. Opsin subfamily. Phosphorylated on some or all of the serine and threonine residues present in the C-terminal region. Post-translationally, contains one covalently linked retinal chromophore.

The protein localises to the membrane. The protein resides in the cell projection. Its subcellular location is the cilium. It is found in the photoreceptor outer segment. Functionally, photoreceptor required for image-forming vision at low light intensity. While most salt water fish species use retinal as chromophore, most freshwater fish use 3-dehydroretinal, or a mixture of retinal and 3-dehydroretinal. Light-induced isomerization of 11-cis to all-trans retinal triggers a conformational change that activates signaling via G-proteins. Subsequent receptor phosphorylation mediates displacement of the bound G-protein alpha subunit by arrestin and terminates signaling. The chain is Rhodopsin (rho) from Sarpa salpa (Salema).